Consider the following 633-residue polypeptide: Leucine-rich repeat and IQ domain-containing protein 3 (633 aa).

LRR repeat units lie at residues 51-72 (SLRV…QGCK), 73-94 (KLIK…TFWN), and 98-119 (NLKL…CVLS). Residues 132–179 (CPVSLKKGYRHVLVNSIWPLKALDHHVISDEEIIQNWHLPERFKTFSQ) enclose the LRRCT domain. In terms of domain architecture, IQ spans 215 to 244 (HNSPVLIIQRWIRGFIVRKHLSPYFTRKRH). A disordered region spans residues 322-343 (NSKQPRHHIQKGQNEMKSDSED). Positions 556 to 616 (EKREKRKYKQ…AKVEFINTYY (61 aa)) form a coiled coil.

The protein is Leucine-rich repeat and IQ domain-containing protein 3 (Lrriq3) of Rattus norvegicus (Rat).